The sequence spans 476 residues: Protein transport protein Sec61 subunit alpha (476 aa).

Over 2 to 33 (GIKFLEVIKPFCAVLPEIQKPERKIQFREKVL) the chain is Cytoplasmic. Residues 34–53 (WTAITLFIFLVCCQIPLFGI) form a helical membrane-spanning segment. Residues 54–76 (MSSDSADPFYWMRVILASNRGTL) are Lumenal-facing. The helical transmembrane segment at 77-96 (MELGISPIVTSDLIMQLLAG) threads the bilayer. At 97–117 (AKIIEVGDSPKDRALFNGAQK) the chain is on the cytoplasmic side. Residues 118-138 (LFGMIITIGQAIVYVMTGMYG) form a helical membrane-spanning segment. Residues 139–144 (DPSEMG) lie on the Lumenal side of the membrane. The chain crosses the membrane as a helical span at residues 145–165 (AGICLVIIIQLFVAGLIVLLL). Residues 166-172 (DELLQKG) lie on the Cytoplasmic side of the membrane. The chain crosses the membrane as a helical span at residues 173–193 (YGLGSGISLLIATNICETIVW). Over 194-240 (KAFSPTTVNTGRGTEFEGAIIALFHLLATRTDKVRALREAFYRQNLP) the chain is Lumenal. The helical transmembrane segment at 241–261 (NLMNLIATVFVFAVVIYFQGF) threads the bilayer. Over 262-288 (RVDLPIKSARYRGQYNTYPIKLFYTSN) the chain is Cytoplasmic. The chain crosses the membrane as a helical span at residues 289-309 (IPIILQSALVSNLYVISQMLS). Topologically, residues 310–354 (TRFSGNFIVNLLGTWSDTSTGGPARAYPVGGLCYFLSPPESFGSV) are lumenal. Residues 355–375 (LDDPVHAAIYIVFMLGSCAFF) traverse the membrane as a helical segment. Residues 376–420 (SKTWIEVSGSSAKDVAKQLKEQQMVMRGHRETSMVHELNRYIPTA) are Cytoplasmic-facing. The chain crosses the membrane as a helical span at residues 421–441 (AAFGGLCIGGLSVMADFLGAI). Residues 442 to 445 (GSGT) lie on the Lumenal side of the membrane. A helical transmembrane segment spans residues 446 to 462 (GILLAVTIIYQYFEIFV). Topologically, residues 463–476 (KEQSEMGSMGGLFF) are cytoplasmic.

The protein belongs to the SecY/SEC61-alpha family. In terms of assembly, the SEC61 channel-forming translocon complex consists of channel-forming core components SEC61A1, SEC61B and SEC61G and different auxiliary components such as SEC62 and SEC63. The SEC61 channel associates with the multi-pass translocon (MPT) complex.

It localises to the endoplasmic reticulum membrane. Functionally, component of SEC61 channel-forming translocon complex that mediates transport of signal peptide-containing precursor polypeptides across the endoplasmic reticulum (ER). Forms a ribosome receptor and a gated pore in the ER membrane, both functions required for cotranslational translocation of nascent polypeptides. May cooperate with auxiliary protein SEC62, SEC63 and HSPA5/BiP to enable post-translational transport of small presecretory proteins. The SEC61 channel is also involved in ER membrane insertion of transmembrane proteins: it mediates membrane insertion of the first few transmembrane segments of proteins, while insertion of subsequent transmembrane regions of multi-pass membrane proteins is mediated by the multi-pass translocon (MPT) complex. This is Protein transport protein Sec61 subunit alpha (sec61a) from Boreogadus saida (Polar cod).